Consider the following 998-residue polypeptide: Collagen alpha-1(I) chain (998 aa).

The tract at residues 1 to 998 (SYGYDEKGGV…GPPGPPGPPG (998 aa)) is disordered. A compositionally biased stretch (low complexity) spans 9–22 (GVSVPGPMGPSGPR). Pro25, Pro28, Pro30, Pro39, Pro42, Pro45, Pro59, Pro74, Pro80, Pro89, and Pro95 each carry 4-hydroxyproline. A compositionally biased stretch (basic and acidic residues) spans 62–76 (NGDDGEAGKPGRPGE). Lys98 bears the 5-hydroxylysine; alternate mark. O-linked (Gal...) hydroxylysine; alternate glycosylation is present at Lys98. Ser104 carries the phosphoserine modification. Low complexity predominate over residues 112 to 128 (DAGPAGPKGEPGSPGEN). Residues Pro122, Pro125, Pro131, Pro140, Pro146, Pro167, Pro176, Pro179, Pro206, Pro209, Pro221, Pro227, Pro236, Pro242, Pro245, and Pro260 each carry the 4-hydroxyproline modification. Residues 146–164 (PGASGPAGARGNDGATGAA) are compositionally biased toward low complexity. A compositionally biased stretch (pro residues) spans 166-178 (PPGPTGPAGPPGF). The span at 212-251 (AGAAGPAGNPGADGQPGAKGANGAPGIAGAPGFPGARGPS) shows a compositional bias: low complexity. Lys263 is subject to 5-hydroxylysine. A 4-hydroxyproline mark is found at Pro269, Pro272, Pro284, Pro293, Pro308, Pro314, Pro323, and Pro329. The segment covering 318–327 (GERGGPGSRG) has biased composition (gly residues). Residue Lys338 is modified to 5-hydroxylysine. A 4-hydroxyproline mark is found at Pro347, Pro356, Pro362, Pro368, Pro377, Pro380, Pro389, Pro398, Pro404, Pro416, Pro425, Pro434, Pro437, Pro455, Pro472, Pro478, Pro484, Pro490, Pro496, Pro502, Pro514, Pro523, Pro537, Pro543, and Pro552. A compositionally biased stretch (low complexity) spans 371–397 (KGLTGSPGSPGPDGKTGPPGPAGQDGR). Residues 406–425 (ARGQAGVMGFPGPKGAAGEP) are compositionally biased toward low complexity. Over residues 484–493 (PGEAGKPGEQ) the composition is skewed to low complexity. Lys564 bears the 5-hydroxylysine mark. 4-hydroxyproline is present on residues Pro570, Pro585, and Pro591. Over residues 597-611 (SGPSGPAGPTGARGA) the composition is skewed to low complexity. Ser600 is subject to Phosphoserine. 8 positions are modified to 4-hydroxyproline: Pro612, Pro618, Pro621, Pro630, Pro636, Pro654, Pro663, and Pro672. The segment covering 624 to 651 (AGFAGPPGADGQPGAKGEPGDAGAKGDA) has biased composition (low complexity). Pro residues predominate over residues 653–665 (PPGPAGPTGPPGP). Position 675 is a 5-hydroxylysine (Lys675). Low complexity predominate over residues 680 to 696 (SAGPPGATGFPGAAGRV). Pro684 and Pro690 each carry 4-hydroxyproline. 3-hydroxyproline is present on Pro698. Residues Pro699, Pro708, Pro711, Pro732, Pro741, Pro749, Pro758, Pro776, Pro785, Pro788, Pro794, Pro809, Pro815, Pro821, Pro830, and Pro836 each carry the 4-hydroxyproline modification. Over residues 725 to 734 (ETGPAGRPGE) the composition is skewed to low complexity. Low complexity predominate over residues 746-758 (KGSPGADGPAGAP). Positions 808 to 818 (PPGPMGPPGLA) are enriched in pro residues. The residue at position 845 (Lys845) is a 5-hydroxylysine. Positions 853-868 (PGPPGAPGAPGAPGPV) are enriched in pro residues. A 4-hydroxyproline mark is found at Pro856, Pro859, and Pro862. Positions 889–903 (AGPAGARGPAGPQGP) are enriched in low complexity. Basic and acidic residues predominate over residues 904 to 918 (RGDKGETGEQGDRGI). Residue Lys907 is modified to 5-hydroxylysine. A 5-hydroxylysine; alternate modification is found at Lys919. The O-linked (Gal...) hydroxylysine; alternate glycan is linked to Lys919. Residues Pro934, Pro937, Pro955, and Pro970 each carry the 4-hydroxyproline modification. The span at 937-970 (PGEQGPSGASGPAGPRGPPGSAGSPGKDGLNGLP) shows a compositional bias: low complexity. A 3-hydroxyproline modification is found at Pro975. Pro976 bears the 4-hydroxyproline mark. A compositionally biased stretch (pro residues) spans 988-998 (VGPPGPPGPPG). A 3-hydroxyproline modification is found at Pro990. Pro991 is modified (4-hydroxyproline). Pro993 bears the 3-hydroxyproline mark. A 4-hydroxyproline modification is found at Pro994. 3-hydroxyproline is present on Pro996. At Pro997 the chain carries 4-hydroxyproline.

The protein belongs to the fibrillar collagen family. In terms of assembly, trimers of one alpha 2(I) and two alpha 1(I) chains. In terms of processing, contains mostly 4-hydroxyproline. Proline residues at the third position of the tripeptide repeating unit (G-X-Y) are hydroxylated in some or all of the chains. Post-translationally, contains 3-hydroxyproline at a few sites. This modification occurs on the first proline residue in the sequence motif Gly-Pro-Hyp, where Hyp is 4-hydroxyproline. Lysine residues at the third position of the tripeptide repeating unit (G-X-Y) are 5-hydroxylated in some or all of the chains. In terms of processing, O-glycosylated on hydroxylated lysine residues. The O-linked glycan consists of a Glc-Gal disaccharide. As to expression, expressed in bones.

The protein localises to the secreted. The protein resides in the extracellular space. It localises to the extracellular matrix. Type I collagen is a member of group I collagen (fibrillar forming collagen). In Nothrotheriops shastensis (Shasta ground sloth), this protein is Collagen alpha-1(I) chain.